A 122-amino-acid chain; its full sequence is Fluoride-specific ion channel FluC (122 aa).

The next 4 membrane-spanning stretches (helical) occupy residues 1–21 (MIGT…SRML), 34–54 (FPYG…LFFS), 60–80 (GVHI…FTTF), and 100–120 (FLNI…GFLI).

Belongs to the fluoride channel Fluc/FEX (TC 1.A.43) family.

The protein resides in the cell inner membrane. It catalyses the reaction fluoride(in) = fluoride(out). Its function is as follows. Fluoride-specific ion channel. Important for reducing fluoride concentration in the cell, thus reducing its toxicity. The protein is Fluoride-specific ion channel FluC of Campylobacter lari (strain RM2100 / D67 / ATCC BAA-1060).